The primary structure comprises 477 residues: MHLPSSSSLYSSPTKSLFAMFLKARALSVTTQNPPDLFSLLHHSPNAKHLRHLHAHLLRTFLYSNVVLSSKLVLAYSKLNHLFPTSLSVFWHMPYRNIFSWNIIIGEFSRSGFASKSIDLFLRMWRESCVRPDDFTLPLILRACSASREAKSGDLIHVLCLKLGFSSSLFVSSALVIMYVDMGKLLHARKLFDDMPVRDSVLYTAMFGGYVQQGEAMLGLAMFREMGYSGFALDSVVMVSLLMACGQLGALKHGKSVHGWCIRRCSCLGLNLGNAITDMYVKCSILDYAHTVFVNMSRRDVISWSSLILGYGLDGDVVMSFKLFDEMLKEGIEPNAVTFLGVLSACAHGGLVEKSWLYFRLMQEYNIVPELKHYASVADCMSRAGLLEEAEKFLEDMPVKPDEAVMGAVLSGCKVYGNVEVGERVARELIQLKPRKASYYVTLAGLYSAAGRFDEAESLRQWMKEKQISKVPGCSSI.

PPR repeat units follow at residues 65 to 96, 97 to 131, 133 to 167, 168 to 198, 199 to 233, 234 to 264, 269 to 299, 300 to 334, 335 to 369, and 370 to 400; these read NVVL…MPYR, NIFS…SCVR, DDFT…GFSS, SLFV…MPVR, DSVL…GFAL, DSVV…CIRR, GLNL…MSRR, DVIS…GIEP, NAVT…NIVP, and ELKH…MPVK. A type E motif; degenerate region spans residues 405 to 477; sequence VMGAVLSGCK…ISKVPGCSSI (73 aa).

Belongs to the PPR family. PCMP-E subfamily.

This chain is Pentatricopeptide repeat-containing protein At4g14170 (PCMP-E17), found in Arabidopsis thaliana (Mouse-ear cress).